A 180-amino-acid polypeptide reads, in one-letter code: Segregation and condensation protein B (180 aa).

It belongs to the ScpB family. In terms of assembly, homodimer. Homodimerization may be required to stabilize the binding of ScpA to the Smc head domains. Component of a cohesin-like complex composed of ScpA, ScpB and the Smc homodimer, in which ScpA and ScpB bind to the head domain of Smc. The presence of the three proteins is required for the association of the complex with DNA.

Its subcellular location is the cytoplasm. In terms of biological role, participates in chromosomal partition during cell division. May act via the formation of a condensin-like complex containing Smc and ScpA that pull DNA away from mid-cell into both cell halves. This is Segregation and condensation protein B from Staphylococcus epidermidis (strain ATCC 35984 / DSM 28319 / BCRC 17069 / CCUG 31568 / BM 3577 / RP62A).